A 115-amino-acid polypeptide reads, in one-letter code: Large ribosomal subunit protein P2x (115 aa).

Residues 78 to 115 (GGGGGAASAAEPVAESKKKVEEVKDESSDDAGMMGLFD) are disordered. Residues 91–103 (AESKKKVEEVKDE) are compositionally biased toward basic and acidic residues. Phosphoserine occurs at positions 104 and 105.

Belongs to the eukaryotic ribosomal protein P1/P2 family. In terms of assembly, P1 and P2 exist as dimers at the large ribosomal subunit.

Plays an important role in the elongation step of protein synthesis. This chain is Large ribosomal subunit protein P2x (RPP2C), found in Arabidopsis thaliana (Mouse-ear cress).